A 144-amino-acid polypeptide reads, in one-letter code: Maximins 10/H15 (144 aa).

A signal peptide spans 1–18 (MNFKYIVAVSFLIASAYA). Positions 19-43 (RSVQNDEQSLSQRDVLEEESLREIR) are excised as a propeptide. Position 70 is a serine amide (S70). The propeptide occupies 74–123 (TAEDHEVMKRLEAVMRDLDSLDYPEEATERETRGFNQEEIANLFTKKEKR). Residue L143 is modified to Leucine amide.

Belongs to the bombinin family. Expressed by the skin glands.

It is found in the secreted. Maximin-10 shows antimicrobial activity against bacteria and against the fungus C.albicans. It has little hemolytic activity. Its function is as follows. Maximin-H15 shows antimicrobial activity against bacteria and against the fungus C.albicans. Shows strong hemolytic activity. The protein is Maximins 10/H15 of Bombina maxima (Giant fire-bellied toad).